Reading from the N-terminus, the 121-residue chain is Large ribosomal subunit protein bL20 (121 aa).

This sequence belongs to the bacterial ribosomal protein bL20 family.

In terms of biological role, binds directly to 23S ribosomal RNA and is necessary for the in vitro assembly process of the 50S ribosomal subunit. It is not involved in the protein synthesizing functions of that subunit. The protein is Large ribosomal subunit protein bL20 of Ruegeria sp. (strain TM1040) (Silicibacter sp.).